The sequence spans 326 residues: Transposase InsH for insertion sequence element IS5Y (326 aa).

Belongs to the transposase 11 family.

In terms of biological role, involved in the transposition of the insertion sequence IS5. In Escherichia coli (strain K12), this protein is Transposase InsH for insertion sequence element IS5Y (insH5).